Here is a 130-residue protein sequence, read N- to C-terminus: Large ribosomal subunit protein bL12 (130 aa).

Belongs to the bacterial ribosomal protein bL12 family. As to quaternary structure, homodimer. Part of the ribosomal stalk of the 50S ribosomal subunit. Forms a multimeric L10(L12)X complex, where L10 forms an elongated spine to which 2 to 4 L12 dimers bind in a sequential fashion. Binds GTP-bound translation factors.

Functionally, forms part of the ribosomal stalk which helps the ribosome interact with GTP-bound translation factors. Is thus essential for accurate translation. The chain is Large ribosomal subunit protein bL12 from Chlamydia trachomatis serovar L2 (strain ATCC VR-902B / DSM 19102 / 434/Bu).